Reading from the N-terminus, the 326-residue chain is MIEKLWYQRSWLNWLFAPFAALFALLTTMRRYAYRAGIFSSYRAPVPVIVVGNITVGGNGKTPMVLWLVELLTKAGYKPGVVSRGYGGKAPHYPYLLHPETTAAEAGDEPVLIYQRCGCPVAVAPKRAKAVQLLVEQCGVDVIICDDGLQHYALQRDIEFVVMDGERRLGNGWLMPMGPLRETASRLRQVMAVVCNGGQARPDEIQMSLQPAPLRNVRTNHTAVVSGAVDAMAGIGYPPRFFNSLLKQGYAVNQQVAYADHQAFNAAELHQRFAQRPLIMTEKDAVKCRDFALDNWWYLPVTAQLPEKFATRLLAQLKELRHGAGL.

55-62 contacts ATP; it reads TVGGNGKT.

It belongs to the LpxK family.

It catalyses the reaction a lipid A disaccharide + ATP = a lipid IVA + ADP + H(+). Its pathway is glycolipid biosynthesis; lipid IV(A) biosynthesis; lipid IV(A) from (3R)-3-hydroxytetradecanoyl-[acyl-carrier-protein] and UDP-N-acetyl-alpha-D-glucosamine: step 6/6. Its function is as follows. Transfers the gamma-phosphate of ATP to the 4'-position of a tetraacyldisaccharide 1-phosphate intermediate (termed DS-1-P) to form tetraacyldisaccharide 1,4'-bis-phosphate (lipid IVA). The chain is Tetraacyldisaccharide 4'-kinase from Tolumonas auensis (strain DSM 9187 / NBRC 110442 / TA 4).